Here is a 177-residue protein sequence, read N- to C-terminus: Endothelin-2 (177 aa).

The first 23 residues, 1–23 (MPTALCSIALALLVALHEGKSQA), serve as a signal peptide directing secretion. Residues 24–45 (ATTPIPEQPAPLPRARGSHLRT) constitute a propeptide that is removed on maturation. Disulfide bonds link Cys48–Cys62 and Cys50–Cys58. The propeptide occupies 69–177 (VNTPGQTAPY…RPTHSRQRKR (109 aa)). The tract at residues 95 to 110 (CECYSARDPACATFCH) is endothelin-like. The segment at 155–177 (HFARQQQKPTRETRPTHSRQRKR) is disordered.

This sequence belongs to the endothelin/sarafotoxin family. In terms of tissue distribution, expressed in various organs including heart, lung, liver, kidney, gastrointestinal tract, uterus and ovary, but not in spleen. Within the gastrointestinal tract, gene expression was detected in rumen, a ruminant-specific digestive organ, as well as stomach, duodenum and colon.

It is found in the secreted. Endothelins are endothelium-derived vasoconstrictor peptides. This chain is Endothelin-2 (EDN2), found in Bos taurus (Bovine).